We begin with the raw amino-acid sequence, 522 residues long: Stellatic acid synthase (522 aa).

Residues 23–43 (IYGIYEPLLALFAVYSVAVVV) traverse the membrane as a helical segment. Asn267 and Asn451 each carry an N-linked (GlcNAc...) asparagine glycan. Cys464 is a heme binding site. Asn495 carries N-linked (GlcNAc...) asparagine glycosylation.

This sequence belongs to the cytochrome P450 family. Requires heme as cofactor.

It localises to the membrane. The enzyme catalyses stellata-2,6,19-triene + 3 reduced [NADPH--hemoprotein reductase] + 3 O2 = stellatate + 3 oxidized [NADPH--hemoprotein reductase] + 4 H2O + 4 H(+). The protein operates within secondary metabolite biosynthesis; terpenoid biosynthesis. Its function is as follows. Cytochrome P450 monooxygenase; part of the gene cluster that mediates the biosynthesis of the sesterterpene stellatic acid. The first step in the pathway is performed by the stellatatriene synthase that possesses both prenyl transferase and terpene cyclase activity, converting isopentenyl diphosphate and dimethylallyl diphosphate into geranylgeranyl diphosphate (GGDP) and then converting GGDP into stellata-2,6,19-triene. The cytochrome P450 monooxygenase Stl-P450 then catalyzes three successive oxidation reactions on the C-20 methyl group to generate the carboxylic acid of stellatic acid. In Emericella variicolor (Aspergillus stellatus), this protein is Stellatic acid synthase.